The primary structure comprises 388 residues: S-adenosylmethionine synthase (388 aa).

Residue H16 coordinates ATP. A Mg(2+)-binding site is contributed by D18. K(+) is bound at residue E44. E57 and Q100 together coordinate L-methionine. Residues 100-110 (QSPEIAQGVDR) are flexible loop. Residues 165-167 (DAK), 231-232 (KF), D240, 246-247 (RK), A263, and K267 each bind ATP. Position 240 (D240) interacts with L-methionine. K271 is a binding site for L-methionine.

It belongs to the AdoMet synthase family. As to quaternary structure, homotetramer; dimer of dimers. Mg(2+) serves as cofactor. It depends on K(+) as a cofactor.

The protein localises to the cytoplasm. It carries out the reaction L-methionine + ATP + H2O = S-adenosyl-L-methionine + phosphate + diphosphate. It functions in the pathway amino-acid biosynthesis; S-adenosyl-L-methionine biosynthesis; S-adenosyl-L-methionine from L-methionine: step 1/1. In terms of biological role, catalyzes the formation of S-adenosylmethionine (AdoMet) from methionine and ATP. The overall synthetic reaction is composed of two sequential steps, AdoMet formation and the subsequent tripolyphosphate hydrolysis which occurs prior to release of AdoMet from the enzyme. This Psychrobacter arcticus (strain DSM 17307 / VKM B-2377 / 273-4) protein is S-adenosylmethionine synthase.